The following is a 106-amino-acid chain: L-rhamnose mutarotase (106 aa).

Substrate is bound at residue Tyr20. The active-site Proton donor is the His24. Substrate-binding positions include Tyr43 and 78–79 (WW).

It belongs to the rhamnose mutarotase family. As to quaternary structure, homodimer.

It localises to the cytoplasm. It carries out the reaction alpha-L-rhamnose = beta-L-rhamnose. Its pathway is carbohydrate metabolism; L-rhamnose metabolism. In terms of biological role, involved in the anomeric conversion of L-rhamnose. This chain is L-rhamnose mutarotase, found in Verminephrobacter eiseniae (strain EF01-2).